The primary structure comprises 156 residues: Urease accessory protein UreE (156 aa).

A disordered region spans residues 133 to 156; it reads RPESGAYGSGRTMGHDHGPFHVHA. Residues 145-156 are compositionally biased toward basic and acidic residues; the sequence is MGHDHGPFHVHA.

It belongs to the UreE family.

The protein localises to the cytoplasm. In terms of biological role, involved in urease metallocenter assembly. Binds nickel. Probably functions as a nickel donor during metallocenter assembly. In Rhodobacter capsulatus (Rhodopseudomonas capsulata), this protein is Urease accessory protein UreE.